The primary structure comprises 388 residues: Protein-glutamate methylesterase/protein-glutamine glutaminase (388 aa).

A Response regulatory domain is found at 20–138; that stretch reads RVMVVDDSVV…ESAGAEVFRH (119 aa). D71 bears the 4-aspartylphosphate mark. The 194-residue stretch at 193–386 folds into the CheB-type methylesterase domain; it reads PTAPRVLLIG…PKLVRLFSGD (194 aa). Active-site residues include S204, H232, and D328.

This sequence belongs to the CheB family. Phosphorylated by CheA. Phosphorylation of the N-terminal regulatory domain activates the methylesterase activity.

The protein localises to the cytoplasm. It carries out the reaction [protein]-L-glutamate 5-O-methyl ester + H2O = L-glutamyl-[protein] + methanol + H(+). The enzyme catalyses L-glutaminyl-[protein] + H2O = L-glutamyl-[protein] + NH4(+). Its function is as follows. Involved in chemotaxis. Part of a chemotaxis signal transduction system that modulates chemotaxis in response to various stimuli. Catalyzes the demethylation of specific methylglutamate residues introduced into the chemoreceptors (methyl-accepting chemotaxis proteins or MCP) by CheR. Also mediates the irreversible deamidation of specific glutamine residues to glutamic acid. This chain is Protein-glutamate methylesterase/protein-glutamine glutaminase, found in Rhodopseudomonas palustris (strain HaA2).